The following is a 70-amino-acid chain: Large ribosomal subunit protein eL38 (70 aa).

Belongs to the eukaryotic ribosomal protein eL38 family.

This chain is Large ribosomal subunit protein eL38 (RPL38), found in Artemia franciscana (Brine shrimp).